The following is a 559-amino-acid chain: Polypeptide N-acetylgalactosaminyltransferase 1 (559 aa).

Residues 1-8 (MRKFAYCK) lie on the Cytoplasmic side of the membrane. A helical; Signal-anchor for type II membrane protein transmembrane segment spans residues 9 to 28 (VVLATSLIWVLLDMFLLLYF). Topologically, residues 29-559 (SECNKCDEKK…LRNVTLPEIF (531 aa)) are lumenal. Residues 45–65 (GDVLEPVQKPHEGPGEMGKPV) are disordered. An N-linked (GlcNAc...) asparagine glycan is attached at asparagine 95. Cystine bridges form between cysteine 106/cysteine 339, cysteine 330/cysteine 408, cysteine 442/cysteine 459, cysteine 482/cysteine 497, and cysteine 523/cysteine 540. Residues 115-225 (LPTTSVVIVF…VGWLEPLLAR (111 aa)) are catalytic subdomain A. Substrate-binding residues include aspartate 156 and arginine 186. The Mn(2+) site is built by aspartate 209 and histidine 211. Residues 285 to 347 (PVRTPTMAGG…TCSHVGHVFR (63 aa)) are catalytic subdomain B. A substrate-binding site is contributed by tryptophan 316. Position 344 (histidine 344) interacts with Mn(2+). Residues arginine 347 and tyrosine 352 each contribute to the substrate site. The Ricin B-type lectin domain occupies 429–551 (FSLGEIRNVE…GSRSQQWLLR (123 aa)). N-linked (GlcNAc...) asparagine glycosylation is present at asparagine 552.

The protein belongs to the glycosyltransferase 2 family. GalNAc-T subfamily. It depends on Mn(2+) as a cofactor. Widely expressed. Expressed in all tissues tested.

The protein localises to the golgi apparatus. It localises to the golgi stack membrane. It is found in the secreted. It catalyses the reaction L-seryl-[protein] + UDP-N-acetyl-alpha-D-galactosamine = a 3-O-[N-acetyl-alpha-D-galactosaminyl]-L-seryl-[protein] + UDP + H(+). It carries out the reaction L-threonyl-[protein] + UDP-N-acetyl-alpha-D-galactosamine = a 3-O-[N-acetyl-alpha-D-galactosaminyl]-L-threonyl-[protein] + UDP + H(+). Its pathway is protein modification; protein glycosylation. Its function is as follows. Catalyzes the initial reaction in O-linked oligosaccharide biosynthesis, the transfer of an N-acetyl-D-galactosamine residue to a serine or threonine residue on the protein receptor. Has a broad spectrum of substrates such as apomucin-, MUC5AC-, MUC1- and MUC2-derived peptides. This Homo sapiens (Human) protein is Polypeptide N-acetylgalactosaminyltransferase 1.